We begin with the raw amino-acid sequence, 131 residues long: uncharacterized protein (131 aa).

3 consecutive transmembrane segments (helical) span residues 13–35 (RFIK…TFPI), 60–79 (LVAL…TYVC), and 100–119 (LFEI…WNIT).

The protein localises to the membrane. This is an uncharacterized protein from Saccharomyces cerevisiae (strain ATCC 204508 / S288c) (Baker's yeast).